A 165-amino-acid polypeptide reads, in one-letter code: Large ribosomal subunit protein uL10 (165 aa).

This sequence belongs to the universal ribosomal protein uL10 family. Part of the ribosomal stalk of the 50S ribosomal subunit. The N-terminus interacts with L11 and the large rRNA to form the base of the stalk. The C-terminus forms an elongated spine to which L12 dimers bind in a sequential fashion forming a multimeric L10(L12)X complex.

Functionally, forms part of the ribosomal stalk, playing a central role in the interaction of the ribosome with GTP-bound translation factors. The chain is Large ribosomal subunit protein uL10 from Cronobacter sakazakii (strain ATCC BAA-894) (Enterobacter sakazakii).